Reading from the N-terminus, the 210-residue chain is Somatotropin (210 aa).

A signal peptide spans 1–22; it reads MAKALVLLSLVLVSVFVNNGTA. His-38 serves as a coordination point for Zn(2+). Cys-71 and Cys-183 are oxidised to a cystine. Glu-192 serves as a coordination point for Zn(2+). A disulfide bridge connects residues Cys-200 and Cys-208.

Belongs to the somatotropin/prolactin family.

The protein resides in the secreted. In terms of biological role, growth hormone plays an important role in growth control and is involved in the regulation of several anabolic processes. Implicated as an osmoregulatory substance important for seawater adaptation. This Misgurnus mizolepis (Chinese weatherloach) protein is Somatotropin (gh).